A 109-amino-acid polypeptide reads, in one-letter code: Small ribosomal subunit protein eS25z (109 aa).

Residues 1-36 (MAPKKDKVPPPSSKPAKSGGGKQKKKKWSKGKQKEK) are disordered. Over residues 22–31 (KQKKKKWSKG) the composition is skewed to basic residues.

It belongs to the eukaryotic ribosomal protein eS25 family.

The protein is Small ribosomal subunit protein eS25z (RPS25A) of Arabidopsis thaliana (Mouse-ear cress).